A 461-amino-acid polypeptide reads, in one-letter code: Fumarate hydratase class II (461 aa).

Substrate contacts are provided by residues 97–99 (SGT), 127–130 (HPND), 137–139 (SSN), and Thr185. Residue His186 is the Proton donor/acceptor of the active site. Ser316 is an active-site residue. Residues Ser317 and 322–324 (KVN) each bind substrate.

Belongs to the class-II fumarase/aspartase family. Fumarase subfamily. As to quaternary structure, homotetramer.

The protein resides in the cytoplasm. The enzyme catalyses (S)-malate = fumarate + H2O. Its pathway is carbohydrate metabolism; tricarboxylic acid cycle; (S)-malate from fumarate: step 1/1. Involved in the TCA cycle. Catalyzes the stereospecific interconversion of fumarate to L-malate. This is Fumarate hydratase class II from Staphylococcus aureus (strain COL).